Consider the following 631-residue polypeptide: MKGIKKSLTEEYLYLDFSHQKEGCIFPLHTSVTLFLLSYCDCTVFKVFLVLPGESTGISLLKNVPSEGVEIQTISRQELPPIVQSCCLPAVVERPDNFCRAGLAVVLRHIIQKSYEADPSKKEILELLGFKKTCLKACAEVSQWTRLCELTVPLAVENFLKESFDQPPTIPAAILELEKKLSEPVRVHNDDKLRRQKLKQQKAAGVGPSLAKEKTKSKGHRQETSEEGDSSSASLELKVAFSKLTIHKEPASANREPSYVRKAKASDLPPLDHVFAEGLYFTLADIVLLPCIHHFLVIICRKLSGKLVEFPLVAAWYQRIQEVPRVQTAASQCGIQFISLPELQTTSSQQPPNLDEAPSAEEQNDPSFIGGPRPTMTKLMEKGIEVMFSPHPCPTWTLDWDTLPAAVSPKEGKMSSDRALRKQQQLNNLVYMVTNQAKPGDRIVDFCSGGGHVGIVLAHVLPSCQVILIENKELSLIRAKKRSDELGLSNIWFIQANMEYFTGMFNIGVALHACGVATDMVIEHCLKTRASFVTCPCCYGFIQNTSKVNFPKSELFKKTLSYKEHMILCRFADQTAVQLPPQRRLIGKQCMCLVDLDRARAAEEHGFSVQVISMEPESCSPKNNMIVGVPI.

A GST C-terminal domain is found at 128–330; that stretch reads LGFKKTCLKA…QEVPRVQTAA (203 aa). Disordered regions lie at residues 188–233 and 345–373; these read HNDD…SSSA and TTSS…GGPR. Basic and acidic residues predominate over residues 211–224; that stretch reads AKEKTKSKGHRQET. Phosphoserine is present on S231.

It belongs to the GSTCD family.

It is found in the cytoplasm. The polypeptide is Glutathione S-transferase C-terminal domain-containing protein (GSTCD) (Bos taurus (Bovine)).